Here is a 157-residue protein sequence, read N- to C-terminus: Small ribosomal subunit protein uS7 (157 aa).

This sequence belongs to the universal ribosomal protein uS7 family. As to quaternary structure, part of the 30S ribosomal subunit. Contacts proteins S9 and S11.

In terms of biological role, one of the primary rRNA binding proteins, it binds directly to 16S rRNA where it nucleates assembly of the head domain of the 30S subunit. Is located at the subunit interface close to the decoding center, probably blocks exit of the E-site tRNA. The polypeptide is Small ribosomal subunit protein uS7 (Stenotrophomonas maltophilia (strain R551-3)).